A 264-amino-acid chain; its full sequence is TLC domain-containing protein 2 (264 aa).

6 helical membrane passes run 3–23 (PTGL…HWGL), 42–62 (LCVS…GLSL), 77–97 (WALV…ADLL), 114–134 (VVVS…FSMV), 169–189 (SLAT…LWLF), and 199–219 (LVTL…ILGI). One can recognise a TLC domain in the interval 34–227 (RDRWQWWNLC…GIRILVNDVL (194 aa)). The disordered stretch occupies residues 230 to 264 (RPHPPSPGHEKTRGTRTRRDNGPVTSNSSTLSLKD). Positions 237–250 (GHEKTRGTRTRRDN) are enriched in basic and acidic residues. Over residues 252-264 (PVTSNSSTLSLKD) the composition is skewed to polar residues.

It belongs to the TLCD family.

The protein resides in the cell membrane. Regulates the composition and fluidity of the plasma membrane. Inhibits the incorporation of membrane-fluidizing phospholipids containing omega-3 long-chain polyunsaturated fatty acids (LCPUFA) and thereby promotes membrane rigidity. Does not appear to have any effect on LCPUFA synthesis. This Homo sapiens (Human) protein is TLC domain-containing protein 2 (TLCD2).